Consider the following 219-residue polypeptide: 3-demethoxyubiquinol 3-hydroxylase (219 aa).

The disordered stretch occupies residues Arg-21–Ser-51. A compositionally biased stretch (low complexity) spans Ala-35 to Ala-46. 6 residues coordinate Fe cation: Glu-68, Glu-98, His-101, Glu-150, Glu-182, and His-185.

It belongs to the COQ7 family. Fe cation serves as cofactor.

The protein localises to the cell membrane. It carries out the reaction a 5-methoxy-2-methyl-3-(all-trans-polyprenyl)benzene-1,4-diol + AH2 + O2 = a 3-demethylubiquinol + A + H2O. Its pathway is cofactor biosynthesis; ubiquinone biosynthesis. Catalyzes the hydroxylation of 2-nonaprenyl-3-methyl-6-methoxy-1,4-benzoquinol during ubiquinone biosynthesis. The polypeptide is 3-demethoxyubiquinol 3-hydroxylase (Alcanivorax borkumensis (strain ATCC 700651 / DSM 11573 / NCIMB 13689 / SK2)).